We begin with the raw amino-acid sequence, 893 residues long: MAARVVLDEFTAPAEKAALLERSRGRIEALFGVGLAVLGALGAEEPLPARIWLQLRGAQEAVHSAKEYIKGICEPELEEKECYPKAMHCIFVGAQSLFLKSLIQDTCADLCVLDTGLLGIRGSAEAVVMARSHIQQFVKLFESNENLPSNQRESEIKREFRQFVEAHADSYTMDLLILPTSLKKELLSLTQGEESLFETDDDVITVGDVRPPEYTQSAATGPSSARDEVVVQEDSRNKARTPVSELTKHMDTVFSSSPDVLFVPVNGLSPDEDALSKDRVCHKRRSSDTEERHTKKQFSLENVPEGELLPDGKGSAGNEVIDLSDPASNSTNLSPDGKDTTEEMEYNILVNFFKTMGYSQEIVEKVIREYGPSTEPLLLLEEIEKENKRLQEDRDFPPCTVYPDASQSRNAGVGSTTNELTADSTPKKAQSHTEQSMVERFSQLPFKDSKHCTSNCKVNSFRTVPVGQKQEIWGSKQNSSCTVDLETDGHSASAASASPKDISFVSRGASGHQQRNPAFPENGFQQQTEPLLPNNTKPACEKRSGSCSSPQPKPNYPPLSPPLPLPQLLPSVTEARLGGSSDHIDSSVTGVQRFRDTLKIPYKLELKNEPGRADLKHIVIDGSNVAITHGLKKFFSCRGIAIAVEYFWKLGNRNITVFVPQWRTRRDPNITEQHFLTQLQELGILSLTPARMVFGERIASHDDRFLLHLADKTGGIIVTNDNFREFVTESVSWREIITKRLLQYTFVGDIFMVPDDPLGRNGPRLEEFLRKEAFLRHMQPLLNALPSVGTFDPGFRSPSTQVANNSHQPPPRIQTSSSPWLPQQSHFTALATLPSMQQNPPLPAQRSSAETSELREALLKIFPDSEQKLKIDQILAAHPYMKDLNALSALVLD.

The KH-like domain maps to 59 to 143 (QEAVHSAKEY…IQQFVKLFES (85 aa)). Residues 213–243 (EYTQSAATGPSSARDEVVVQEDSRNKARTPV) are disordered. Polar residues predominate over residues 214-223 (YTQSAATGPS). Residues 225-237 (ARDEVVVQEDSRN) show a composition bias toward basic and acidic residues. Threonine 241 is subject to Phosphothreonine. Phosphoserine is present on residues serine 257, serine 269, and serine 299. Disordered regions lie at residues 273–339 (DALS…DGKD), 394–433 (RDFP…QSHT), and 472–564 (IWGS…PPLP). Polar residues-rich tracts occupy residues 405–433 (ASQS…QSHT) and 523–537 (GFQQ…NNTK). Residues 551 to 564 (QPKPNYPPLSPPLP) are compositionally biased toward pro residues. Phosphoserine is present on serine 560. One can recognise an RNase NYN domain in the interval 615 to 767 (LKHIVIDGSN…LGRNGPRLEE (153 aa)). The tract at residues 793–820 (PGFRSPSTQVANNSHQPPPRIQTSSSPW) is disordered. Residues 797–820 (SPSTQVANNSHQPPPRIQTSSSPW) are compositionally biased toward polar residues. Positions 846-893 (RSSAETSELREALLKIFPDSEQKLKIDQILAAHPYMKDLNALSALVLD) are coCUN.

Belongs to the N4BP1 family. In terms of assembly, interacts with NEDD4. Interacts with ITCH (via WW domain 2). In terms of processing, proteolytically cleaved by CASP8 downstream of TLR3 or TLR4, leading to its inactivation. Mainly cleaved at Asp-488 by CASP8. Cleaved by caspase-like protein MALT1, leading to its inactivation. Mono- and polyubiquitinated on the CoCUN region. Monoubiquitinated by NEDD4. Polyubiquitinated, leading to its degradation by the proteasome. Sumoylated with SUMO1, abrogating polyubiquitination and subsequent degradation. Desumoylated by SENP1, leading to accumulation in PML nuclear bodies.

The protein localises to the cytoplasm. It is found in the cytosol. Its subcellular location is the nucleus. The protein resides in the nucleolus. It localises to the PML body. Its activity is regulated as follows. Proteolytic cleavage by CASP8 or MALT1 leads to its inactivation. In terms of biological role, potent suppressor of cytokine production that acts as a regulator of innate immune signaling and inflammation. Acts as a key negative regulator of select cytokine and chemokine responses elicited by TRIF-independent Toll-like receptors (TLRs), thereby limiting inflammatory cytokine responses to minor insults. In response to more threatening pathogens, cleaved by CASP8 downstream of TLR3 or TLR4, leading to its inactivation, thereby allowing production of inflammatory cytokines. Acts as a restriction factor against some viruses: restricts viral replication by binding to mRNA viruses and mediating their degradation via its ribonuclease activity. Also acts as an inhibitor of the E3 ubiquitin-protein ligase ITCH: acts by interacting with the second WW domain of ITCH, leading to compete with ITCH's substrates and impairing ubiquitination of substrates. The sequence is that of NEDD4-binding protein 1 from Mus musculus (Mouse).